The chain runs to 253 residues: (S)-2-haloacid dehalogenase (253 aa).

Asp8 acts as the Nucleophile in catalysis. Residues 9 to 10 (AY), Arg39, and 114 to 115 (SN) contribute to the an (S)-2-haloacid site. An important for catalytic activity region spans residues 171-176 (SSNGFD).

Belongs to the HAD-like hydrolase superfamily. S-2-haloalkanoic acid dehalogenase family. Homodimer.

It carries out the reaction an (S)-2-haloacid + H2O = a (2R)-2-hydroxycarboxylate + a halide anion + H(+). The catalysed reaction is (S)-2-chloropropanoate + H2O = (R)-lactate + chloride + H(+). Functionally, catalyzes the hydrolytic dehalogenation of small (S)-2-haloalkanoic acids to yield the corresponding (R)-2-hydroxyalkanoic acids. Acts on acids of short chain lengths, C(2) to C(4), with inversion of configuration at C-2. Active with 2-halogenated carboxylic acids and converts only the S-isomer (or L-isomer) of 2-chloropropionic acid with inversion of configuration to produce R-lactate (or D-isomer). The protein is (S)-2-haloacid dehalogenase of Xanthobacter autotrophicus.